Reading from the N-terminus, the 135-residue chain is 2-iminobutanoate/2-iminopropanoate deaminase (135 aa).

At serine 2 the chain carries N-acetylserine. Residues lysine 13, lysine 60, lysine 67, and lysine 134 each carry the N6-succinyllysine modification.

This sequence belongs to the RutC family. As to quaternary structure, homotrimer. Interacts with YTHDF2. As to expression, expressed predominantly in liver and kidney. Lower levels in lung and brain.

It is found in the cytoplasm. The protein resides in the nucleus. It localises to the peroxisome. Its subcellular location is the mitochondrion. It catalyses the reaction 2-iminobutanoate + H2O = 2-oxobutanoate + NH4(+). The catalysed reaction is 2-iminopropanoate + H2O = pyruvate + NH4(+). Catalyzes the hydrolytic deamination of enamine/imine intermediates that form during the course of normal metabolism. May facilitate the release of ammonia from these potentially toxic reactive metabolites, reducing their impact on cellular components. It may act on enamine/imine intermediates formed by several types of pyridoxal-5'-phosphate-dependent dehydratases including L-threonine dehydratase. In terms of biological role, also promotes endoribonucleolytic cleavage of some transcripts by promoting recruitment of the ribonuclease P/MRP complex. Acts by bridging YTHDF2 and the ribonuclease P/MRP complex. RIDA/HRSP12 binds to N6-methyladenosine (m6A)-containing mRNAs containing a 5'-GGUUC-3' motif: cooperative binding of RIDA/HRSP12 and YTHDF2 to such transcripts lead to recruitment of the ribonuclease P/MRP complex and subsequent endoribonucleolytic cleavage. The chain is 2-iminobutanoate/2-iminopropanoate deaminase from Mus musculus (Mouse).